We begin with the raw amino-acid sequence, 567 residues long: MSNQMTDSTSAGSGTEHSVDTNTALKAGSPNDLKVSHEEDLNDLEKTAEETLQQKPAKEYIFVSLCCVMVAFGGFVFGWDTGTISGFVNQTDFLRRFGQEKADGSHYLSNVRTGLIVSIFNIGCAVGGIVLSNIGDRWGRRIGLITVIIIYVIGIIIQIASVDKWYQYFIGRIISGLGVGGITVLSPMLISETAPKHLRGTLVSCYQLMITFGIFLGYCTNYGTKNYSNSVQWRVPLGLCFAWAIFMVLGMMFVPESARFLVETDQIEEARKSLAKTNKVSIDDPVVKYELLKIQSSIELEKAAGNASWGELITGKPSMFRRTLMGIMIQSLQQLTGDNYFFYYGTTIFQSVGMDDSFETSIVLGIVNFASTFFALYTVDHFGRRNCLLYGCVGMVACYVVYASVGVTRLWPDGPDHPDISSKGAGNCMIVFACFYIFCFATTWAPIAYVVISESYPLRVKGKAMAIASASNWIWGFLIGFFTPFITSAIHFYYGYVFMGCMVFAFFYVYFFVPETKGLTLEEVNEMYSEGVLPWKSSSWVPSSRRGAEYDVDALQHDDKPWYKAML.

A compositionally biased stretch (polar residues) spans 1–24; it reads MSNQMTDSTSAGSGTEHSVDTNTA. The tract at residues 1–36 is disordered; that stretch reads MSNQMTDSTSAGSGTEHSVDTNTALKAGSPNDLKVS. The Cytoplasmic segment spans residues 18-62; sequence SVDTNTALKAGSPNDLKVSHEEDLNDLEKTAEETLQQKPAKEYIF. Residues 63-83 form a helical membrane-spanning segment; that stretch reads VSLCCVMVAFGGFVFGWDTGT. The Extracellular portion of the chain corresponds to 84–113; sequence ISGFVNQTDFLRRFGQEKADGSHYLSNVRT. N-linked (GlcNAc...) asparagine glycosylation is present at asparagine 89. A helical transmembrane segment spans residues 114–134; the sequence is GLIVSIFNIGCAVGGIVLSNI. Over 135-141 the chain is Cytoplasmic; the sequence is GDRWGRR. A helical transmembrane segment spans residues 142 to 162; the sequence is IGLITVIIIYVIGIIIQIASV. Residues 163-167 lie on the Extracellular side of the membrane; the sequence is DKWYQ. A helical transmembrane segment spans residues 168–188; it reads YFIGRIISGLGVGGITVLSPM. Over 189 to 199 the chain is Cytoplasmic; sequence LISETAPKHLR. A helical membrane pass occupies residues 200–220; that stretch reads GTLVSCYQLMITFGIFLGYCT. Over 221–234 the chain is Extracellular; it reads NYGTKNYSNSVQWR. Residues 235–255 form a helical membrane-spanning segment; the sequence is VPLGLCFAWAIFMVLGMMFVP. The Cytoplasmic portion of the chain corresponds to 256–334; sequence ESARFLVETD…MGIMIQSLQQ (79 aa). The chain crosses the membrane as a helical span at residues 335-354; that stretch reads LTGDNYFFYYGTTIFQSVGM. At 355–358 the chain is on the extracellular side; it reads DDSF. A helical membrane pass occupies residues 359 to 379; that stretch reads ETSIVLGIVNFASTFFALYTV. Residues 380-386 are Cytoplasmic-facing; sequence DHFGRRN. Residues 387–407 form a helical membrane-spanning segment; the sequence is CLLYGCVGMVACYVVYASVGV. The Extracellular portion of the chain corresponds to 408–429; sequence TRLWPDGPDHPDISSKGAGNCM. The chain crosses the membrane as a helical span at residues 430 to 450; the sequence is IVFACFYIFCFATTWAPIAYV. Residues 451–466 lie on the Cytoplasmic side of the membrane; the sequence is VISESYPLRVKGKAMA. A helical membrane pass occupies residues 467 to 487; the sequence is IASASNWIWGFLIGFFTPFIT. Residues 488 to 493 are Extracellular-facing; the sequence is SAIHFY. A helical transmembrane segment spans residues 494-514; sequence YGYVFMGCMVFAFFYVYFFVP. The Cytoplasmic segment spans residues 515 to 567; the sequence is ETKGLTLEEVNEMYSEGVLPWKSSSWVPSSRRGAEYDVDALQHDDKPWYKAML.

It belongs to the major facilitator superfamily. Sugar transporter (TC 2.A.1.1) family.

Its subcellular location is the membrane. In terms of biological role, low-affinity glucose transporter. This Kluyveromyces lactis (strain ATCC 8585 / CBS 2359 / DSM 70799 / NBRC 1267 / NRRL Y-1140 / WM37) (Yeast) protein is Low-affinity glucose transporter (RAG1).